The chain runs to 119 residues: MARVKRAVNARKHHRKILKLAKGYYGGKSKLFKTANESVIRALRNAYVGRKLKKRDFRKLWIVRINAAARINGLSYSKFMNGIKTAGININRKMLSEIAINDPKTFTELVQVAKAQLNV.

The protein belongs to the bacterial ribosomal protein bL20 family.

Functionally, binds directly to 23S ribosomal RNA and is necessary for the in vitro assembly process of the 50S ribosomal subunit. It is not involved in the protein synthesizing functions of that subunit. In Clostridium kluyveri (strain NBRC 12016), this protein is Large ribosomal subunit protein bL20.